The chain runs to 294 residues: Very long chain fatty acid elongase 5 (294 aa).

7 helical membrane-spanning segments follow: residues 26–46, 64–84, 112–132, 141–161, 172–192, 207–227, and 231–251; these read WLLL…LLIV, ILVV…YELV, VLWW…FFIL, FLHI…MNWV, FNSF…IPAI, LVQF…PCGF, and WLYF…NFYI. The disordered stretch occupies residues 261 to 294; that stretch reads AKKDPRHNGIKSVNGHSNGASHTNAVKNRKARTD. Polar residues predominate over residues 274–286; the sequence is NGHSNGASHTNAV.

It belongs to the ELO family. ELOVL5 subfamily. Expression is highest in intestine, followed by brain and heart, and lowest in gill. Also expressed in liver, spleen and muscle.

Its subcellular location is the endoplasmic reticulum membrane. It is found in the cell projection. The protein localises to the dendrite. The catalysed reaction is a very-long-chain acyl-CoA + malonyl-CoA + H(+) = a very-long-chain 3-oxoacyl-CoA + CO2 + CoA. It catalyses the reaction (6Z,9Z,12Z)-octadecatrienoyl-CoA + malonyl-CoA + H(+) = (8Z,11Z,14Z)-3-oxoeicosatrienoyl-CoA + CO2 + CoA. It carries out the reaction (9Z,12Z,15Z)-octadecatrienoyl-CoA + malonyl-CoA + H(+) = (11Z,14Z,17Z)-3-oxoeicosatrienoyl-CoA + CO2 + CoA. The enzyme catalyses (9Z)-hexadecenoyl-CoA + malonyl-CoA + H(+) = 3-oxo-(11Z)-octadecenoyl-CoA + CO2 + CoA. The catalysed reaction is (9Z)-octadecenoyl-CoA + malonyl-CoA + H(+) = 3-oxo-(11Z)-eicosenoyl-CoA + CO2 + CoA. It catalyses the reaction (11Z)-octadecenoyl-CoA + malonyl-CoA + H(+) = 3-oxo-(13Z)-eicosenoyl-CoA + CO2 + CoA. It carries out the reaction (9Z,12Z)-octadecadienoyl-CoA + malonyl-CoA + H(+) = (11Z,14Z)-3-oxoicosa-11,14-dienoyl-CoA + CO2 + CoA. The enzyme catalyses (6Z,9Z,12Z,15Z)-octadecatetraenoyl-CoA + malonyl-CoA + H(+) = (8Z,11Z,14Z,17Z)-3-oxoicosatetraenoyl-CoA + CO2 + CoA. The catalysed reaction is (5Z,8Z,11Z,14Z)-eicosatetraenoyl-CoA + malonyl-CoA + H(+) = (7Z,10Z,13Z,16Z)-3-oxodocosatetraenoyl-CoA + CO2 + CoA. It catalyses the reaction (5Z,8Z,11Z,14Z,17Z)-eicosapentaenoyl-CoA + malonyl-CoA + H(+) = 3-oxo-(7Z,10Z,13Z,16Z,19Z)-docosapentaenoyl-CoA + CO2 + CoA. It functions in the pathway lipid metabolism; polyunsaturated fatty acid biosynthesis. In terms of biological role, catalyzes the first and rate-limiting reaction of the four reactions that constitute the long-chain fatty acids elongation cycle. This endoplasmic reticulum-bound enzymatic process allows the addition of 2 carbons to the chain of long- and very long-chain fatty acids (VLCFAs) per cycle. Condensing enzyme that acts specifically toward polyunsaturated acyl-CoA with the higher activity toward C18:3(n-6) acyl-CoA. May participate in the production of monounsaturated and of polyunsaturated VLCFAs of different chain lengths that are involved in multiple biological processes as precursors of membrane lipids and lipid mediators. In conditions where the essential linoleic and alpha linoleic fatty acids are lacking it is also involved in the synthesis of Mead acid from oleic acid. The sequence is that of Very long chain fatty acid elongase 5 from Tachysurus fulvidraco (Yellow catfish).